We begin with the raw amino-acid sequence, 431 residues long: UDP-N-acetylglucosamine--N-acetylmuramyl-(pentapeptide) pyrophosphoryl-undecaprenol N-acetylglucosamine transferase (431 aa).

Residues Thr-29 to Gly-31, Asn-141, Arg-177, Ser-205, Ile-258, and Gln-303 each bind UDP-N-acetyl-alpha-D-glucosamine. Residues Ala-370–Pro-431 are disordered. Positions Lys-395 to Leu-420 are enriched in polar residues.

Belongs to the glycosyltransferase 28 family. MurG subfamily.

It is found in the cell inner membrane. It catalyses the reaction di-trans,octa-cis-undecaprenyl diphospho-N-acetyl-alpha-D-muramoyl-L-alanyl-D-glutamyl-meso-2,6-diaminopimeloyl-D-alanyl-D-alanine + UDP-N-acetyl-alpha-D-glucosamine = di-trans,octa-cis-undecaprenyl diphospho-[N-acetyl-alpha-D-glucosaminyl-(1-&gt;4)]-N-acetyl-alpha-D-muramoyl-L-alanyl-D-glutamyl-meso-2,6-diaminopimeloyl-D-alanyl-D-alanine + UDP + H(+). The protein operates within cell wall biogenesis; peptidoglycan biosynthesis. Functionally, cell wall formation. Catalyzes the transfer of a GlcNAc subunit on undecaprenyl-pyrophosphoryl-MurNAc-pentapeptide (lipid intermediate I) to form undecaprenyl-pyrophosphoryl-MurNAc-(pentapeptide)GlcNAc (lipid intermediate II). This chain is UDP-N-acetylglucosamine--N-acetylmuramyl-(pentapeptide) pyrophosphoryl-undecaprenol N-acetylglucosamine transferase, found in Xanthomonas euvesicatoria pv. vesicatoria (strain 85-10) (Xanthomonas campestris pv. vesicatoria).